The chain runs to 439 residues: Phenylacetate-coenzyme A ligase (439 aa).

Belongs to the phenylacetyl-CoA ligase family. In terms of assembly, monomer.

The catalysed reaction is 2-phenylacetate + ATP + CoA = phenylacetyl-CoA + AMP + diphosphate. The protein operates within aromatic compound metabolism; phenylacetate degradation. With respect to regulation, inhibited by divalent cations (zinc, copper, mercury) and by the sulfhydryl reagents 5,5-dithiobis(2-nitrobenzoic acid), N-ethylmaleimide and p-chloromercuribenzoate. Catalyzes the activation of phenylacetic acid (PA) to phenylacetyl-CoA (PA-CoA). Involved in the phenylalanine metabolism. Can also use CTP and UTP as substrate. The polypeptide is Phenylacetate-coenzyme A ligase (paaK) (Pseudomonas putida (Arthrobacter siderocapsulatus)).